A 127-amino-acid chain; its full sequence is UPF0102 protein Paes_0016 (127 aa).

It belongs to the UPF0102 family.

The protein is UPF0102 protein Paes_0016 of Prosthecochloris aestuarii (strain DSM 271 / SK 413).